The following is a 167-amino-acid chain: MEEKTRKLKTLERLLIYDRLLRFALDLLTGIREELKADIDETRLIAESVLEEKEKKVVEDFILKIEELFLLKTDEVLDHIYDEYEVFNFDVTFLSAIPEEIERELERLALIDTVNTKLQLLIDILDEAFCLIPEENERIRVVLTPFRVYKELLEHAIDFNNKFKEKT.

Residues 28 to 59 (LTGIREELKADIDETRLIAESVLEEKEKKVVE) are a coiled coil.

This is an uncharacterized protein from Aquifex aeolicus (strain VF5).